A 233-amino-acid chain; its full sequence is 2-amino-5-formylamino-6-ribosylaminopyrimidin-4(3H)-one 5'-monophosphate deformylase (233 aa).

Fe cation contacts are provided by E33, H35, D44, and H114.

It belongs to the creatininase superfamily. FAPy deformylase family. Homodimer. It depends on Fe(2+) as a cofactor. Zn(2+) is required as a cofactor.

The catalysed reaction is 2-amino-5-formylamino-6-(5-phospho-D-ribosylamino)pyrimidin-4(3H)-one + H2O = 2,5-diamino-6-(1-D-ribosylamino)pyrimidin-4(3H)-one 5'-phosphate + formate + H(+). It functions in the pathway cofactor biosynthesis; coenzyme F420 biosynthesis. It participates in cofactor biosynthesis; riboflavin biosynthesis. Functionally, catalyzes the hydrolysis of the formamide of 2-amino-5-formylamino-6-ribosylamino-4(3H)-pyrimidinone 5'-monophosphate (FAPy) to form 2,5-diamino-6-ribosylamino-4(3H)-pyrimidinone 5'-phosphate (APy). The chain is 2-amino-5-formylamino-6-ribosylaminopyrimidin-4(3H)-one 5'-monophosphate deformylase from Methanosphaera stadtmanae (strain ATCC 43021 / DSM 3091 / JCM 11832 / MCB-3).